A 490-amino-acid polypeptide reads, in one-letter code: Metal cation symporter ZIP14 (490 aa).

Positions 1–28 are cleaved as a signal peptide; it reads MELLRPALPSYFLLTLLSIWTAASEARA. At 29–155 the chain is on the extracellular side; the sequence is VSTGMPTISA…PSSVEVWGYG (127 aa). Asn75, Asn85, and Asn100 each carry an N-linked (GlcNAc...) asparagine glycan. A disordered region spans residues 127–146; sequence ACSSENQENEENEQTEEGRP. The chain crosses the membrane as a helical span at residues 156 to 176; sequence LLCVTVISLCSLLGASVVPFM. Residues 177–184 lie on the Cytoplasmic side of the membrane; the sequence is KKTFYKRL. A helical transmembrane segment spans residues 185 to 205; that stretch reads LLYFIALAIGTLYSNALFQLI. Residues 206 to 222 lie on the Extracellular side of the membrane; sequence PEAFGFNPMEDYYVSKS. Residues 223–243 traverse the membrane as a helical segment; that stretch reads AVVFGGFYLFFFTEKILKMLL. Topologically, residues 244 to 395 are cytoplasmic; sequence KQKNEHHHGH…LLNAGMSLQQ (152 aa). The HHHGHXHX-motif signature appears at 249-256; that stretch reads HHHGHSHY. The XEXPHE-motif signature appears at 374–379; that stretch reads EEFPHE. The helical transmembrane segment at 396 to 416 threads the bilayer; it reads ALFFNFLSACCCYVGLGFGIL. Over 417 to 422 the chain is Extracellular; that stretch reads AGSHFS. Residues 423–443 traverse the membrane as a helical segment; it reads ANWIFALAGGMFLYISLADMF. Over 444 to 459 the chain is Cytoplasmic; it reads PEMNEVSQEDERKGSA. The chain crosses the membrane as a helical span at residues 460–480; it reads LIPFVIQNLGLLTGFGIMLVL. Over 481–490 the chain is Extracellular; sequence TMYSGHIQIG.

Belongs to the ZIP transporter (TC 2.A.5) family. Homotrimer. Post-translationally, ubiquitinated. Ubiquitination occurs upon iron depletion. The ubiquitinated form undergoes proteasomal degradation. N-glycosylated. N-glycosylation at Asn-100 is required for iron-regulated extraction of the transporter from membranes and subsequent proteasomal degradation.

The protein localises to the cell membrane. The protein resides in the apical cell membrane. It localises to the basolateral cell membrane. Its subcellular location is the early endosome membrane. It is found in the late endosome membrane. The protein localises to the lysosome membrane. It carries out the reaction Zn(2+)(out) + 2 hydrogencarbonate(out) = Zn(2+)(in) + 2 hydrogencarbonate(in). The catalysed reaction is Mn(2+)(out) + 2 hydrogencarbonate(out) = Mn(2+)(in) + 2 hydrogencarbonate(in). It catalyses the reaction Fe(2+)(out) + 2 hydrogencarbonate(out) = Fe(2+)(in) + 2 hydrogencarbonate(in). The enzyme catalyses Cd(2+)(out) + 2 hydrogencarbonate(out) = Cd(2+)(in) + 2 hydrogencarbonate(in). Functionally, electroneutral transporter of the plasma membrane mediating the cellular uptake of the divalent metal cations zinc, manganese and iron that are important for tissue homeostasis, metabolism, development and immunity. Functions as an energy-dependent symporter, transporting through the membranes an electroneutral complex composed of a divalent metal cation and two bicarbonate anions. Beside these endogenous cellular substrates, can also import cadmium a non-essential metal which is cytotoxic and carcinogenic. In Bos taurus (Bovine), this protein is Metal cation symporter ZIP14.